The following is a 422-amino-acid chain: Enolase (422 aa).

Gln-162 contacts (2R)-2-phosphoglycerate. Glu-204 serves as the catalytic Proton donor. Mg(2+) contacts are provided by Asp-241, Glu-284, and Asp-311. (2R)-2-phosphoglycerate is bound by residues Lys-336, Arg-365, Ser-366, and Lys-387. The active-site Proton acceptor is the Lys-336.

The protein belongs to the enolase family. In terms of assembly, component of the RNA degradosome, a multiprotein complex involved in RNA processing and mRNA degradation. Requires Mg(2+) as cofactor.

It is found in the cytoplasm. The protein resides in the secreted. Its subcellular location is the cell surface. It catalyses the reaction (2R)-2-phosphoglycerate = phosphoenolpyruvate + H2O. It participates in carbohydrate degradation; glycolysis; pyruvate from D-glyceraldehyde 3-phosphate: step 4/5. Catalyzes the reversible conversion of 2-phosphoglycerate (2-PG) into phosphoenolpyruvate (PEP). It is essential for the degradation of carbohydrates via glycolysis. The protein is Enolase of Legionella pneumophila (strain Corby).